The sequence spans 190 residues: ADP-ribosylation factor-like protein 6 (190 aa).

Gly-2 carries the N-myristoyl glycine lipid modification. Residues 24–31 (GLDNSGKT), Thr-50, 69–73 (DMAGQ), Gly-72, 130–133 (NKMD), and Ala-164 each bind GTP. Positions 31 and 50 each coordinate Mg(2+).

This sequence belongs to the small GTPase superfamily. Arf family.

The protein localises to the cytoplasm. In Caenorhabditis briggsae, this protein is ADP-ribosylation factor-like protein 6.